The chain runs to 929 residues: Protocadherin gamma-B7 (929 aa).

The N-terminal stretch at 1-30 is a signal peptide; the sequence is MGGSCAQRRRAGPRQVLFPLLLPLFYPTLC. Cadherin domains are found at residues 31-133, 134-242, 243-347, 348-452, 453-562, and 570-675; these read EPIR…APQF, QKDE…PPVF, SQDV…SPEI, IITS…APVF, GQSA…APRV, and DGSA…LPDF. Residues 31–691 lie on the Extracellular side of the membrane; that stretch reads EPIRYSIPEE…SDSQAEMQFY (661 aa). Residues asparagine 419 and asparagine 545 are each glycosylated (N-linked (GlcNAc...) asparagine). A helical membrane pass occupies residues 692 to 712; that stretch reads LVVALALISVLFLLAVILAIA. At 713–929 the chain is on the cytoplasmic side; sequence LRLRQSFSPT…KKKSGKKEKK (217 aa). Disordered stretches follow at residues 806–838 and 899–929; these read QAPP…WPNN and ATLT…KEKK. A compositionally biased stretch (polar residues) spans 807–838; that stretch reads APPNTDWRFSQAQRPGTSGSQNGDDTGTWPNN. Basic residues predominate over residues 919–929; the sequence is NKKKSGKKEKK.

Its subcellular location is the cell membrane. In terms of biological role, potential calcium-dependent cell-adhesion protein. May be involved in the establishment and maintenance of specific neuronal connections in the brain. This chain is Protocadherin gamma-B7 (PCDHGB7), found in Pan troglodytes (Chimpanzee).